A 1839-amino-acid polypeptide reads, in one-letter code: DNA-directed RNA polymerase II subunit RPB1 (1839 aa).

Residues C66, C69, C76, H79, C106, C109, and C147 each contribute to the Zn(2+) site. The interval 152–174 (DIDDVQSHSTDEPVKKSRGGCGA) is disordered. Residues 156-166 (VQSHSTDEPVK) are compositionally biased toward basic and acidic residues. C172 is a binding site for Zn(2+). A DNA-binding region spans residues 326–397 (TQKSGRPIKS…PETVTPYNIE (72 aa)). 3 residues coordinate Mg(2+): D495, D497, and D499. Positions 785–795 (GQQNVEGKRIP) are alpha-amanitin binding. The tract at residues 829–841 (PQEFFFHAMGGRE) is bridging helix. A compositionally biased stretch (low complexity) spans 1538–1726 (PSSSPGYSPS…PSYGPTSPSY (189 aa)). The disordered stretch occupies residues 1538–1839 (PSSSPGYSPS…DASKDDKGNP (302 aa)). 27 repeat units span residues 1544–1550 (YSPSSPG), 1551–1557 (YSPTSPG), 1558–1564 (YSPTSPG), 1565–1571 (YSPTSPG), 1572–1578 (YSPTSPT), 1579–1585 (YSPSSPG), 1586–1592 (YSPTSPA), 1593–1599 (YSPTSPS), 1600–1606 (YSPTSPS), 1607–1613 (YSPTSPS), 1614–1620 (YSPTSPS), 1621–1627 (YSPTSPS), 1628–1634 (YSPTSPS), 1635–1641 (YSPTSPA), 1642–1648 (YSPTSPA), 1649–1655 (YSPTSPA), 1656–1662 (YSPTSPS), 1663–1669 (YSPTSPS), 1670–1676 (YSPTSPS), 1677–1683 (YSPTSPS), 1684–1690 (YSPTSPS), 1691–1697 (YSPTSPA), 1698–1704 (YSPTSPG), 1705–1711 (YSPTSPS), 1712–1718 (YSPTSPS), 1719–1725 (YGPTSPS), and 1726–1732 (YNPQSAK). The segment at 1544 to 1813 (YSPSSPGYSP…LPGYSPSSTG (270 aa)) is C-terminal domain (CTD); 37 X 7 AA tandem approximate repeats of Y-[GNS]-P-[QST]-[LNS]-[APT]-[AGKNRSTY]. Residues 1727 to 1745 (NPQSAKYSPSIAYSPSNAR) are compositionally biased toward polar residues. A 28; approximate repeat occupies 1733–1738 (YSPSIA). A run of 6 repeats spans residues 1739–1745 (YSPSNAR), 1752–1758 (YSPTSPN), 1759–1765 (YSPTSPS), 1766–1772 (YSPTSPS), 1773–1779 (YSPSSPT), and 1780–1786 (YSPSSPY). Residues 1747-1798 (SPASPYSPTSPNYSPTSPSYSPTSPSYSPSSPTYSPSSPYSSGASPDYSPSA) are compositionally biased toward low complexity. The 35; approximate repeat unit spans residues 1794 to 1799 (YSPSAG). 2 repeat units span residues 1800–1806 (YSPTLPG) and 1807–1813 (YSPSSTG). The span at 1818–1839 (HEGDKKDKTGKKDASKDDKGNP) shows a compositional bias: basic and acidic residues.

The protein belongs to the RNA polymerase beta' chain family. Component of the RNA polymerase II (Pol II) complex consisting of at least 12 subunits. Interacts with RDM1. Interacts (via CTD) with PRP40A, PRP40B, PRP40C and CYP59. Interacts with MEE12/CCG1 and MEE14/CBP1. Binds (via CTD) to ATX1, especially when phosphorylated on 'Ser-5' of the heptapeptide repeat. Post-translationally, the tandem 7 residues repeats in the C-terminal domain (CTD) can be highly phosphorylated. The phosphorylation activates Pol II. Phosphorylation occurs mainly at residues 'Ser-2' and 'Ser-5' of the heptapeptide repeat. The phosphorylation state is believed to result from the balanced action of site-specific CTD kinases and phosphatase, and a 'CTD code' that specifies the position of Pol II within the transcription cycle has been proposed. ATX1 seems to regulate phosphorylation statment. 'Ser-2' and 'Ser-5' phosphorylation are repressed by flavopiridol (Flap) and seliciclib (Selic), inhibitors of CDK7 and CDK9.

The protein resides in the nucleus. The enzyme catalyses RNA(n) + a ribonucleoside 5'-triphosphate = RNA(n+1) + diphosphate. Functionally, DNA-dependent RNA polymerase catalyzes the transcription of DNA into RNA using the four ribonucleoside triphosphates as substrates. Largest and catalytic component of RNA polymerase II which synthesizes mRNA precursors and many functional non-coding RNAs. Forms the polymerase active center together with the second largest subunit. Pol II is the central component of the basal RNA polymerase II transcription machinery. It is composed of mobile elements that move relative to each other. NRPB1 is part of the core element with the central large cleft, the clamp element that moves to open and close the cleft and the jaws that are thought to grab the incoming DNA template. At the start of transcription, a single-stranded DNA template strand of the promoter is positioned within the central active site cleft of Pol II. A bridging helix emanates from NRPB1 and crosses the cleft near the catalytic site and is thought to promote translocation of Pol II by acting as a ratchet that moves the RNA-DNA hybrid through the active site by switching from straight to bent conformations at each step of nucleotide addition. During transcription elongation, Pol II moves on the template as the transcript elongates. Elongation is influenced by the phosphorylation status of the C-terminal domain (CTD) of Pol II largest subunit (NRPB1), which serves as a platform for assembly of factors that regulate transcription initiation, elongation, termination and mRNA processing. This is DNA-directed RNA polymerase II subunit RPB1 from Arabidopsis thaliana (Mouse-ear cress).